Reading from the N-terminus, the 278-residue chain is MTTNSVTSGRRGEPLVLRDLSKRFGAREVLRNTQLRVEPGQFIAIVGRSGCGKSTLLRLVAGLETASAGSITVNDKLLTGLSDDTRIMFQDARLLPWKRIIDNVALGLPKDRRAEALKVLDQVGLADRANDWPARLSGGQRQRVSLARALVHKPRLLLLDEPLGALDALTRIEMHRLIEDLWRASGFTALLVTHDVQEAVALADRVILIEDGRIALDETVSLARPRSQGDAAFAALEKRILDRVLQKPAAPERESFTHPNDGEPRWPGVPAHGVRWAV.

The ABC transporter domain maps to Leu15 to Leu236. Residue Gly47–Ser54 coordinates ATP. A compositionally biased stretch (basic and acidic residues) spans Pro251 to Pro264. Residues Pro251–Val278 form a disordered region.

Belongs to the ABC transporter superfamily. Aliphatic sulfonates importer (TC 3.A.1.17.2) family. As to quaternary structure, the complex is composed of two ATP-binding proteins (SsuB), two transmembrane proteins (SsuC) and a solute-binding protein (SsuA).

The protein localises to the cell inner membrane. It carries out the reaction ATP + H2O + aliphatic sulfonate-[sulfonate-binding protein]Side 1 = ADP + phosphate + aliphatic sulfonateSide 2 + [sulfonate-binding protein]Side 1.. Its function is as follows. Part of the ABC transporter complex SsuABC involved in aliphatic sulfonates import. Responsible for energy coupling to the transport system. This chain is Aliphatic sulfonates import ATP-binding protein SsuB, found in Albidiferax ferrireducens (strain ATCC BAA-621 / DSM 15236 / T118) (Rhodoferax ferrireducens).